An 82-amino-acid polypeptide reads, in one-letter code: uncharacterized protein (82 aa).

This is an uncharacterized protein from Rickettsia prowazekii (strain Madrid E).